The chain runs to 303 residues: MKFQGLVLIDNCKNQWVVGPLIGKGGFGSIYTTNDNNYVVKIEPKANGSLFTEQAFYTRVLKPSVIEEWKKSHNIKHVGLITCKAFGLYKSINVEYRFLVINRLGADLDAVIRANNNRLPERSVMLIGIEILNTIQFMHEQGYSHGDIKASNIVLDQIDKNKLYLVDYGLVSKFMSNGEHVPFIRNPNKMDNGTLEFTPIDSHKGYVVSRRGDLETLGYCMIRWLGGILPWTKISETKNSALVSAAKQKYVNNTATLLMTSLQYAPRELLQYITMVNSLTYFEEPNYDEFRRVLMNGVMKNFC.

The protein belongs to the protein kinase superfamily. Ser/Thr protein kinase family. Poxviruses subfamily. Interacts with host JIP1; this interaction increases the amount of MAPK bound to JIP1 and subsequently increases the activity of transcription factors, such as JUN, that respond to these complexes. Interacts with protein OPG198; this interaction inhibits the repressive activity of OPG198 pseudokinase on viral replication factory formation. It depends on Mg(2+) as a cofactor. Autophosphorylated.

The protein resides in the virion. It localises to the host cytoplasm. The catalysed reaction is L-seryl-[protein] + ATP = O-phospho-L-seryl-[protein] + ADP + H(+). It carries out the reaction L-threonyl-[protein] + ATP = O-phospho-L-threonyl-[protein] + ADP + H(+). In terms of biological role, essential serine/threonine-protein kinase that plays different role in the viral life cycle. Phosphorylates the host small ribosomal protein RACK1 thereby customizing the ribosomes to a state optimal for viral mRNAs (which contain poly-A leaders) but not for host mRNAs. Facilitates viral DNA replication by inhibiting host BANF1, a cellular host defense responsive to foreign DNA. Phosphorylates host BANF1 on serine and threonine residues; this leads to BANF1 relocalization to the cytoplasm, loss of dimerization and impaired DNA binding activity. Indeed, BANF1 activity depends on its DNA-binding property which is blocked by VPK1-mediated phosphorylation. Required for viral intermediate genes expression, probably by inhibiting host BANF1. Modulates cellular responses via host JUN by two different mechanisms, either by direct phosphorylation or by modulation of upstream JIP1-MAPK complexes. Seems to participate in the accumulation/processing of late proteins and thus in virion maturation. In addition, inhibits B12 repressive activity on viral DNA replication via a phosphorylation-dependent mechanism. This chain is B1 kinase (OPG187), found in Cynomys gunnisoni (Gunnison's prairie dog).